Consider the following 125-residue polypeptide: Probable 4-amino-4-deoxy-L-arabinose-phosphoundecaprenol flippase subunit ArnF (125 aa).

At 1 to 2 the chain is on the cytoplasmic side; the sequence is MG. Residues 3–23 traverse the membrane as a helical segment; the sequence is VMWGLISVAIASLAQLSLGFA. The Periplasmic segment spans residues 24–33; that stretch reads MMRLPSIAHP. The helical transmembrane segment at 34-54 threads the bilayer; the sequence is LAFISGLGAFNAATLALFAGL. Topologically, residues 55-76 are cytoplasmic; the sequence is AGYLVSVFCWQKTLHMLALSKA. The chain crosses the membrane as a helical span at residues 77–97; that stretch reads YALLSLSYVLVWVASMLLPGL. The Periplasmic segment spans residues 98 to 100; that stretch reads QGA. Residues 101 to 121 traverse the membrane as a helical segment; the sequence is FSLKAMLGVLCIMAGVMLIFL. At 122 to 125 the chain is on the cytoplasmic side; sequence PARS.

The protein belongs to the ArnF family. In terms of assembly, heterodimer of ArnE and ArnF.

Its subcellular location is the cell inner membrane. It participates in bacterial outer membrane biogenesis; lipopolysaccharide biosynthesis. In terms of biological role, translocates 4-amino-4-deoxy-L-arabinose-phosphoundecaprenol (alpha-L-Ara4N-phosphoundecaprenol) from the cytoplasmic to the periplasmic side of the inner membrane. The polypeptide is Probable 4-amino-4-deoxy-L-arabinose-phosphoundecaprenol flippase subunit ArnF (Salmonella paratyphi A (strain ATCC 9150 / SARB42)).